We begin with the raw amino-acid sequence, 321 residues long: GTP cyclohydrolase FolE2 (321 aa).

This sequence belongs to the GTP cyclohydrolase IV family.

It catalyses the reaction GTP + H2O = 7,8-dihydroneopterin 3'-triphosphate + formate + H(+). Its pathway is cofactor biosynthesis; 7,8-dihydroneopterin triphosphate biosynthesis; 7,8-dihydroneopterin triphosphate from GTP: step 1/1. Converts GTP to 7,8-dihydroneopterin triphosphate. In Paracoccus denitrificans (strain Pd 1222), this protein is GTP cyclohydrolase FolE2.